A 394-amino-acid chain; its full sequence is Elongation factor Tu (394 aa).

The region spanning 10–205 (KPHMNVGTIG…SMDNYFDLPE (196 aa)) is the tr-type G domain. A G1 region spans residues 19–26 (GHVDHGKT). 19-26 (GHVDHGKT) provides a ligand contact to GTP. Residue Thr26 participates in Mg(2+) binding. Positions 61-65 (GITIN) are G2. The interval 82–85 (DCPG) is G3. Residues 82 to 86 (DCPGH) and 137 to 140 (NKLD) contribute to the GTP site. Residues 137 to 140 (NKLD) are G4. The G5 stretch occupies residues 173 to 175 (SAF).

It belongs to the TRAFAC class translation factor GTPase superfamily. Classic translation factor GTPase family. EF-Tu/EF-1A subfamily. Monomer.

Its subcellular location is the cytoplasm. It catalyses the reaction GTP + H2O = GDP + phosphate + H(+). GTP hydrolase that promotes the GTP-dependent binding of aminoacyl-tRNA to the A-site of ribosomes during protein biosynthesis. This chain is Elongation factor Tu, found in Borreliella burgdorferi (strain ATCC 35210 / DSM 4680 / CIP 102532 / B31) (Borrelia burgdorferi).